The following is a 546-amino-acid chain: CTP synthase (546 aa).

The segment at 1–265 is amidoligase domain; that stretch reads MTKYVFVTGG…DEIVCHKLNI (265 aa). Ser-13 serves as a coordination point for CTP. Ser-13 is a binding site for UTP. ATP-binding positions include 14–19 and Asp-71; that span reads SLGKGI. Mg(2+) is bound by residues Asp-71 and Glu-139. Residues 146–148, 186–191, and Lys-222 each bind CTP; these read DIE and KTKPTQ. Residues 186-191 and Lys-222 contribute to the UTP site; that span reads KTKPTQ. Positions 290 to 543 constitute a Glutamine amidotransferase type-1 domain; that stretch reads NIAFVGKYVD…VRAALAHQQK (254 aa). Gly-351 is a binding site for L-glutamine. Cys-378 (nucleophile; for glutamine hydrolysis) is an active-site residue. Residues 379 to 382, Glu-402, and Arg-469 each bind L-glutamine; that span reads LGMQ. Active-site residues include His-516 and Glu-518.

Belongs to the CTP synthase family. In terms of assembly, homotetramer.

The enzyme catalyses UTP + L-glutamine + ATP + H2O = CTP + L-glutamate + ADP + phosphate + 2 H(+). It carries out the reaction L-glutamine + H2O = L-glutamate + NH4(+). It catalyses the reaction UTP + NH4(+) + ATP = CTP + ADP + phosphate + 2 H(+). It participates in pyrimidine metabolism; CTP biosynthesis via de novo pathway; CTP from UDP: step 2/2. With respect to regulation, allosterically activated by GTP, when glutamine is the substrate; GTP has no effect on the reaction when ammonia is the substrate. The allosteric effector GTP functions by stabilizing the protein conformation that binds the tetrahedral intermediate(s) formed during glutamine hydrolysis. Inhibited by the product CTP, via allosteric rather than competitive inhibition. In terms of biological role, catalyzes the ATP-dependent amination of UTP to CTP with either L-glutamine or ammonia as the source of nitrogen. Regulates intracellular CTP levels through interactions with the four ribonucleotide triphosphates. This chain is CTP synthase, found in Thiobacillus denitrificans (strain ATCC 25259 / T1).